The primary structure comprises 292 residues: Ribosomal protein L11 methyltransferase (292 aa).

4 residues coordinate S-adenosyl-L-methionine: T143, G164, D186, and N227.

The protein belongs to the methyltransferase superfamily. PrmA family.

The protein localises to the cytoplasm. The enzyme catalyses L-lysyl-[protein] + 3 S-adenosyl-L-methionine = N(6),N(6),N(6)-trimethyl-L-lysyl-[protein] + 3 S-adenosyl-L-homocysteine + 3 H(+). In terms of biological role, methylates ribosomal protein L11. The protein is Ribosomal protein L11 methyltransferase of Hahella chejuensis (strain KCTC 2396).